We begin with the raw amino-acid sequence, 280 residues long: Protein HEAT-INDUCED TAS1 TARGET 4 (280 aa).

This sequence belongs to the heat induced plant HTT protein family. As to expression, expressed in seedlings, leaves, stems, inflorescences and siliques.

The protein resides in the cytoplasm. The protein localises to the nucleus. Its function is as follows. Mediates both basal and acquired thermotolerance. The polypeptide is Protein HEAT-INDUCED TAS1 TARGET 4 (Arabidopsis thaliana (Mouse-ear cress)).